We begin with the raw amino-acid sequence, 136 residues long: Ribosome-binding factor A (136 aa).

The protein belongs to the RbfA family. In terms of assembly, monomer. Binds 30S ribosomal subunits, but not 50S ribosomal subunits or 70S ribosomes.

It localises to the cytoplasm. Its function is as follows. One of several proteins that assist in the late maturation steps of the functional core of the 30S ribosomal subunit. Associates with free 30S ribosomal subunits (but not with 30S subunits that are part of 70S ribosomes or polysomes). Required for efficient processing of 16S rRNA. May interact with the 5'-terminal helix region of 16S rRNA. This is Ribosome-binding factor A from Yersinia enterocolitica serotype O:8 / biotype 1B (strain NCTC 13174 / 8081).